An 85-amino-acid chain; its full sequence is Beta-insect depressant toxin BmKITb (85 aa).

The first 21 residues, 1–21 (MKLFLLLVISASMLIDGLVNA), serve as a signal peptide directing secretion. The LCN-type CS-alpha/beta domain occupies 22–82 (DGYIRGSNGC…TWKSESNTCG (61 aa)). Cystine bridges form between C31/C81, C35/C56, C42/C63, and C46/C65. A Glycine amide modification is found at G82.

Expressed by the venom gland.

It is found in the secreted. Functionally, depressant insect beta-toxins cause a transient contraction paralysis followed by a slow flaccid paralysis. They bind voltage-independently at site-4 of sodium channels (Nav) and shift the voltage of activation toward more negative potentials thereby affecting sodium channel activation and promoting spontaneous and repetitive firing. However, this toxin has some characteristics of excitatory toxins such as bursts of activity after the membrane has been hyperpolarized. This toxin is active only on insects. In Olivierus martensii (Manchurian scorpion), this protein is Beta-insect depressant toxin BmKITb.